A 449-amino-acid polypeptide reads, in one-letter code: Hyaluronidase-3 (449 aa).

The first 23 residues, 1–23 (MYHIWIKFLAAWIFLKKFNGVHV), serve as a signal peptide directing secretion. Intrachain disulfides connect cysteine 47–cysteine 340 and cysteine 211–cysteine 227. Asparagine 67, asparagine 103, and asparagine 111 each carry an N-linked (GlcNAc...) asparagine glycan. Glutamate 135 functions as the Proton donor in the catalytic mechanism. The N-linked (GlcNAc...) asparagine glycan is linked to asparagine 153. Asparagine 357 carries an N-linked (GlcNAc...) asparagine glycan. Cystine bridges form between cysteine 365/cysteine 376, cysteine 370/cysteine 427, and cysteine 429/cysteine 438. A glycan (N-linked (GlcNAc...) asparagine) is linked at asparagine 401. One can recognise an EGF-like domain in the interval 427 to 438 (CQCYQGWKGLYC).

The protein belongs to the glycosyl hydrolase 56 family. In terms of assembly, monomer. Expressed by the venom gland.

The protein resides in the secreted. The enzyme catalyses Random hydrolysis of (1-&gt;4)-linkages between N-acetyl-beta-D-glucosamine and D-glucuronate residues in hyaluronate.. Functionally, snake venom endo-hyaluronidase that degrades hyaluronan to smaller oligosaccharide fragments. In venom, it is not toxic by itself, but increases the diffusion of other venom proteins by degrading the extracellular matrix. In addition, it displays antiedematogenic activity. The sequence is that of Hyaluronidase-3 from Cerastes cerastes (Horned desert viper).